Consider the following 353-residue polypeptide: B1 bradykinin receptor (353 aa).

The Extracellular portion of the chain corresponds to 1 to 41; it reads MASQTLVVFQASNQSQLPPPNATLCDGAQEAWHLLHKVLPT. 2 N-linked (GlcNAc...) asparagine glycosylation sites follow: Asn-13 and Asn-21. A helical transmembrane segment spans residues 42 to 62; sequence CVVAICSGGLLGNLFVLSVFL. The Cytoplasmic segment spans residues 63–72; it reads VPRRRLNAAE. The chain crosses the membrane as a helical span at residues 73 to 93; it reads IYLAHLAASDLVFALGLPFWA. The Extracellular segment spans residues 94–110; that stretch reads ETIRNGFHWPFGAPLCR. The cysteines at positions 109 and 189 are disulfide-linked. The helical transmembrane segment at 111–131 threads the bilayer; the sequence is VVNGVIKANLFISIFLVVAIS. Residues 132–154 lie on the Cytoplasmic side of the membrane; it reads RDRYRALVHPVASWRRRRRRHWA. Residues 155–175 form a helical membrane-spanning segment; the sequence is QATCVLIWTAGGLLSIPTFLL. Topologically, residues 176–207 are extracellular; that stretch reads RSVQVVPELNVSACVLPFPHEAWAFVRTVELN. An N-linked (GlcNAc...) asparagine glycan is attached at Asn-185. A helical transmembrane segment spans residues 208 to 228; it reads VLGFLLPLAAILFFNYHILAA. Residues 229 to 251 lie on the Cytoplasmic side of the membrane; it reads LRGREQLSRTRCGGPRDGKTTAL. A helical transmembrane segment spans residues 252 to 272; it reads ILTLVAVFLLCWTPYHVCAFL. At 273-295 the chain is on the extracellular side; sequence EFLLHVRAIRGCFWEDFTDLGLQ. Residues 296–316 traverse the membrane as a helical segment; it reads YTNFFAFINSCLNPVIYVFWG. The Cytoplasmic segment spans residues 317 to 353; it reads QLFRTKIWELYHRCLPRKLTAVSSSRRKEIFQIFWRN. A lipid anchor (S-palmitoyl cysteine) is attached at Cys-330.

This sequence belongs to the G-protein coupled receptor 1 family. Bradykinin receptor subfamily. BDKRB1 sub-subfamily.

It localises to the cell membrane. This is a receptor for bradykinin. Could be a factor in chronic pain and inflammation. This Sus scrofa (Pig) protein is B1 bradykinin receptor (BDKRB1).